The primary structure comprises 211 residues: Large ribosomal subunit protein uL4 (211 aa).

The tract at residues 40-85 (QQAHSRQGTASTLTRSEVRGGGRKPYKQKGTGRARQGSVRTPLRPG) is disordered. The span at 41–54 (QAHSRQGTASTLTR) shows a compositional bias: polar residues. The span at 60 to 71 (GGRKPYKQKGTG) shows a compositional bias: basic residues.

Belongs to the universal ribosomal protein uL4 family. Part of the 50S ribosomal subunit.

In terms of biological role, one of the primary rRNA binding proteins, this protein initially binds near the 5'-end of the 23S rRNA. It is important during the early stages of 50S assembly. It makes multiple contacts with different domains of the 23S rRNA in the assembled 50S subunit and ribosome. Forms part of the polypeptide exit tunnel. In Synechococcus sp. (strain CC9311), this protein is Large ribosomal subunit protein uL4.